The primary structure comprises 255 residues: 3-deoxy-manno-octulosonate cytidylyltransferase (255 aa).

It belongs to the KdsB family.

It is found in the cytoplasm. The enzyme catalyses 3-deoxy-alpha-D-manno-oct-2-ulosonate + CTP = CMP-3-deoxy-beta-D-manno-octulosonate + diphosphate. Its pathway is nucleotide-sugar biosynthesis; CMP-3-deoxy-D-manno-octulosonate biosynthesis; CMP-3-deoxy-D-manno-octulosonate from 3-deoxy-D-manno-octulosonate and CTP: step 1/1. It participates in bacterial outer membrane biogenesis; lipopolysaccharide biosynthesis. In terms of biological role, activates KDO (a required 8-carbon sugar) for incorporation into bacterial lipopolysaccharide in Gram-negative bacteria. The sequence is that of 3-deoxy-manno-octulosonate cytidylyltransferase from Polaromonas sp. (strain JS666 / ATCC BAA-500).